Consider the following 391-residue polypeptide: Outer membrane protein 41 (391 aa).

An N-terminal signal peptide occupies residues 1-20 (MKVKYLMLTLVGAIALNASA). Gln21 carries the pyrrolidone carboxylic acid modification. One can recognise an OmpA-like domain in the interval 282-391 (TKTENILTEK…WNRVVIVRSK (110 aa)).

Belongs to the outer membrane OOP (TC 1.B.6) superfamily. Disulfide-linked heterodimer with Omp40.

It localises to the cell outer membrane. May have porin activity and function in peptidoglycan binding. The sequence is that of Outer membrane protein 41 from Porphyromonas gingivalis (strain ATCC BAA-308 / W83).